A 509-amino-acid chain; its full sequence is Histidine ammonia-lyase (509 aa).

The 5-imidazolinone (Ala-Gly) cross-link spans 144–146 (ASG). Residue Ser-145 is modified to 2,3-didehydroalanine (Ser).

The protein belongs to the PAL/histidase family. Post-translationally, contains an active site 4-methylidene-imidazol-5-one (MIO), which is formed autocatalytically by cyclization and dehydration of residues Ala-Ser-Gly.

It localises to the cytoplasm. The enzyme catalyses L-histidine = trans-urocanate + NH4(+). The protein operates within amino-acid degradation; L-histidine degradation into L-glutamate; N-formimidoyl-L-glutamate from L-histidine: step 1/3. The protein is Histidine ammonia-lyase of Rhodospirillum centenum (strain ATCC 51521 / SW).